The chain runs to 428 residues: Dihydroorotase (428 aa).

The Zn(2+) site is built by His-61 and His-63. Substrate contacts are provided by residues His-63–Arg-65 and Asn-95. Residues Asp-153, His-180, and His-233 each contribute to the Zn(2+) site. Asn-279 provides a ligand contact to substrate. A Zn(2+)-binding site is contributed by Asp-306. Residue Asp-306 is part of the active site. Substrate contacts are provided by residues His-310 and Phe-324–Gly-325.

The protein belongs to the metallo-dependent hydrolases superfamily. DHOase family. Class I DHOase subfamily. It depends on Zn(2+) as a cofactor.

It catalyses the reaction (S)-dihydroorotate + H2O = N-carbamoyl-L-aspartate + H(+). The protein operates within pyrimidine metabolism; UMP biosynthesis via de novo pathway; (S)-dihydroorotate from bicarbonate: step 3/3. Catalyzes the reversible cyclization of carbamoyl aspartate to dihydroorotate. In Geobacillus thermodenitrificans (strain NG80-2), this protein is Dihydroorotase.